The following is a 189-amino-acid chain: GMP synthase [glutamine-hydrolyzing] subunit A (189 aa).

Residues 1 to 189 (MIVILNNGGQ…CKKCGFGFEE (189 aa)) form the Glutamine amidotransferase type-1 domain. Residue Cys76 is the Nucleophile of the active site. Catalysis depends on residues His163 and Glu165.

As to quaternary structure, heterodimer composed of a glutamine amidotransferase subunit (A) and a GMP-binding subunit (B).

The catalysed reaction is XMP + L-glutamine + ATP + H2O = GMP + L-glutamate + AMP + diphosphate + 2 H(+). It functions in the pathway purine metabolism; GMP biosynthesis; GMP from XMP (L-Gln route): step 1/1. Functionally, catalyzes the synthesis of GMP from XMP. This is GMP synthase [glutamine-hydrolyzing] subunit A from Methanococcus maripaludis (strain DSM 14266 / JCM 13030 / NBRC 101832 / S2 / LL).